A 510-amino-acid chain; its full sequence is Probable lipid II flippase MurJ (510 aa).

12 helical membrane-spanning segments follow: residues 13 to 33 (DVVI…LFAN), 81 to 101 (GLVS…AALF), 130 to 150 (FPYL…NTIG), 154 to 174 (VMSF…LFLA), 182 to 202 (LALA…QIPF), 240 to 260 (INLL…ISWL), 266 to 286 (LLEF…LPTL), 315 to 335 (IFLL…PMLL), 357 to 377 (AFNA…GYYA), 396 to 416 (MGFN…ASAM), 443 to 463 (VFFV…WYYV), and 481 to 501 (LVWL…LLGV).

It belongs to the MurJ/MviN family.

Its subcellular location is the cell inner membrane. It participates in cell wall biogenesis; peptidoglycan biosynthesis. Its function is as follows. Involved in peptidoglycan biosynthesis. Transports lipid-linked peptidoglycan precursors from the inner to the outer leaflet of the cytoplasmic membrane. The chain is Probable lipid II flippase MurJ from Haemophilus influenzae (strain ATCC 51907 / DSM 11121 / KW20 / Rd).